The following is an 88-amino-acid chain: Small ribosomal subunit protein bS20 (88 aa).

Residues 1–27 (MANSKSAKKRALQSEKRRQHNASRRSM) form a disordered region.

The protein belongs to the bacterial ribosomal protein bS20 family.

In terms of biological role, binds directly to 16S ribosomal RNA. This is Small ribosomal subunit protein bS20 from Shewanella oneidensis (strain ATCC 700550 / JCM 31522 / CIP 106686 / LMG 19005 / NCIMB 14063 / MR-1).